Reading from the N-terminus, the 327-residue chain is Probable cell division protein WhiA (327 aa).

The H-T-H motif DNA-binding region spans 277–310 (EELGRLADPPMTKDAVAGRIRRLLSMADRKAKQD). The interval 304–327 (DRKAKQDGIPDTESAVTPDLLEDA) is disordered.

It belongs to the WhiA family.

In terms of biological role, involved in cell division and chromosome segregation. This Mycolicibacterium vanbaalenii (strain DSM 7251 / JCM 13017 / BCRC 16820 / KCTC 9966 / NRRL B-24157 / PYR-1) (Mycobacterium vanbaalenii) protein is Probable cell division protein WhiA.